A 435-amino-acid chain; its full sequence is Pregnancy-specific beta-1-glycoprotein 6 (435 aa).

An N-terminal signal peptide occupies residues 1 to 34; sequence MGPLSAPPCTQHITWKGLLLTASLLNFWNLPTTA. In terms of domain architecture, Ig-like V-type spans 35–143; the sequence is QVIIEAKPPK…TGYFTVTLYS (109 aa). 3 N-linked (GlcNAc...) asparagine glycosylation sites follow: Asn61, Asn103, and Asn110. The short motif at 126–128 is the Cell attachment site element; sequence RGD. Ig-like C2-type domains are found at residues 148–233, 241–326, and 334–405; these read PSIS…VTLN, PYIT…VTLN, and PRIY…KEIS. Cystine bridges form between Cys168–Cys216, Cys261–Cys309, and Cys353–Cys393. N-linked (GlcNAc...) asparagine glycans are attached at residues Asn198, Asn267, Asn302, and Asn386.

Belongs to the immunoglobulin superfamily. CEA family.

Its subcellular location is the secreted. The protein is Pregnancy-specific beta-1-glycoprotein 6 (PSG6) of Homo sapiens (Human).